We begin with the raw amino-acid sequence, 600 residues long: MPGGPGAPSSPAASSGSSRAAPSGIAACPLSPPPLARGSPQASGPRRGASVPQKLAETLSSQYGLNVFVAGLLFLLAWAVHATGVGKSDLLCVLTALMLLQLLWMLWYVGRSYMQRRLIRPKDTHAGARWLRGSITLFAFITVVLGCLKVAYFIGFSECLSATEGVFPVTHAVHTLLQVYFLWGHAKDIIMSFKTLERFGVIHSVFTNLLLWANSVLNESKHQLNEHKERLITLGFGNITIVLDDHTPQCNCTPPALCSALSHGIYYLYPFNIEYQILASTMLYVLWKNIGRRVDSSQHQKMQCRFDGVLVGSVLGLTVLAATIAVVVVYMIHIGRSKSKSESALIMFYLYAITVLLLMGAAGLVGSWIYRVDEKSLDESKNPARKLDVDLLVATGSGSWLLSWGSILAIACAETRPPYTWYNLPYSVLVIVEKYVQNIFIIESVHLEPEGVPEDVRTLRVVTVCSSEAAALAASTLGSQGMAQDGSPAVNGNLCLQQRCGKEDQESGWEGATGTTRCLDFLQGGMKRRLLRNITAFLFLCNISLWIPPAFGCRPEYDNGLEEIVFGFEPWIIVVNLAMPFSIFYRMHAAAALFEVYCKI.

The segment at 1-50 (MPGGPGAPSSPAASSGSSRAAPSGIAACPLSPPPLARGSPQASGPRRGAS) is disordered. Over 1 to 56 (MPGGPGAPSSPAASSGSSRAAPSGIAACPLSPPPLARGSPQASGPRRGASVPQKLA) the chain is Cytoplasmic. A compositionally biased stretch (low complexity) spans 7–27 (APSSPAASSGSSRAAPSGIAA). Residues 57–78 (ETLSSQYGLNVFVAGLLFLLAW) form a helical membrane-spanning segment. Over 79 to 86 (AVHATGVG) the chain is Extracellular. Residues 87-110 (KSDLLCVLTALMLLQLLWMLWYVG) form a helical membrane-spanning segment. Over 111-128 (RSYMQRRLIRPKDTHAGA) the chain is Cytoplasmic. A helical membrane pass occupies residues 129–151 (RWLRGSITLFAFITVVLGCLKVA). At 152-161 (YFIGFSECLS) the chain is on the extracellular side. A helical transmembrane segment spans residues 162–186 (ATEGVFPVTHAVHTLLQVYFLWGHA). The Cytoplasmic segment spans residues 187–194 (KDIIMSFK). A helical membrane pass occupies residues 195 to 217 (TLERFGVIHSVFTNLLLWANSVL). Over 218–262 (NESKHQLNEHKERLITLGFGNITIVLDDHTPQCNCTPPALCSALS) the chain is Extracellular. The chain crosses the membrane as a helical span at residues 263–288 (HGIYYLYPFNIEYQILASTMLYVLWK). Topologically, residues 289 to 309 (NIGRRVDSSQHQKMQCRFDGV) are cytoplasmic. Residues 310–332 (LVGSVLGLTVLAATIAVVVVYMI) form a helical membrane-spanning segment. The Extracellular segment spans residues 333-342 (HIGRSKSKSE). A helical transmembrane segment spans residues 343 to 368 (SALIMFYLYAITVLLLMGAAGLVGSW). Residues 369-386 (IYRVDEKSLDESKNPARK) are Cytoplasmic-facing. Residues 387 to 411 (LDVDLLVATGSGSWLLSWGSILAIA) form a helical membrane-spanning segment. Residues 412-421 (CAETRPPYTW) lie on the Extracellular side of the membrane. A helical membrane pass occupies residues 422–442 (YNLPYSVLVIVEKYVQNIFII). Over 443–532 (ESVHLEPEGV…QGGMKRRLLR (90 aa)) the chain is Cytoplasmic. Residues 533–551 (NITAFLFLCNISLWIPPAF) form a helical membrane-spanning segment. At 552–569 (GCRPEYDNGLEEIVFGFE) the chain is on the extracellular side. The helical transmembrane segment at 570–593 (PWIIVVNLAMPFSIFYRMHAAAAL) threads the bilayer. Topologically, residues 594–600 (FEVYCKI) are cytoplasmic.

The protein belongs to the otopetrin family. In terms of assembly, homodimer. Interacts with STAT1, independently of STAT1 phosphorylation status. In terms of tissue distribution, expressed in thymus, heart, kidney, skin, vestibular system of the inner ear, sour taste cells, heart, uterus, dorsal root ganglion, adrenal gland, lactating mammary gland and stimulated mast cells. In the inner ear, expressed in the supporting cells in extrastriolar regions of the saccule and in the utricle, but not in the cochlea. Expressed in brown adipose tissue. Expressed in epididymal white adipose tissue (eWAT), as well as in inguinal fat, in obese animals, but hardly detectable in eWAT from lean mice. Expressed in acid-sensing taste receptor cells (PKD2L1-positive cells), but not in other types of taste cells (at protein level).

It localises to the cell membrane. The protein localises to the cell projection. The protein resides in the microvillus. It catalyses the reaction H(+)(in) = H(+)(out). Activated by both acid and alkali, with proton influx in response to extracellular acid and proton efflux during alkali stimulation. Inhibited by Zn(2+); this inhibition is thought to be pH-sensitive. Currents evoked in response to mild acid (pH 6.0) stimulus may also be mildly potentiated by exposure to Zn(2+). Activated by NH(4)Cl. Proton-selective ion channel. Biphasically modulated by acid and alkali, mediating proton influx and efflux in response to extracellular acid and base stimulation, respectively. Sour taste receptor, which carries inward currents in response to extracellular acidification. Sensor for ammonium chloride (NH(4)Cl) in taste receptor cells. NH(4)Cl acts by increasing the intracellular pH, thereby generating a driving force for proton entry through OTOP1 channel. Might also participate in alkaline sensation. Plays a role in the regulation of Ca(2+) flux in response to purigenic (ATP, ADP and UDP) stimuli, leading to increase in cytosolic Ca(2+) due to influx of extracellular calcium. May play this role by inhibiting P2Y purinoceptor-mediated Ca(2+) release in a Ca(2+)-dependent manner and promote an influx of Ca(2+) in response to ATP. Through this mechanism and possibly others, plays a role in the formation and function of calcium carbonate-based structures in the vestibular system of the inner ear, called otoconia, that sense gravity and linear acceleration. In obesity, may attenuate adipose tissue inflammation, through the negative regulation of IFNG signaling, hence may play an adaptive role in the maintainance of metabolic homeostasis. Following alkali activation, may also be permeable Na(+), K(+), Cs(+) and Li(+). The protein is Proton channel OTOP1 of Mus musculus (Mouse).